The sequence spans 226 residues: Uracil-DNA glycosylase (226 aa).

Asp-68 (proton acceptor) is an active-site residue.

This sequence belongs to the uracil-DNA glycosylase (UDG) superfamily. UNG family.

Its subcellular location is the cytoplasm. The catalysed reaction is Hydrolyzes single-stranded DNA or mismatched double-stranded DNA and polynucleotides, releasing free uracil.. In terms of biological role, excises uracil residues from the DNA which can arise as a result of misincorporation of dUMP residues by DNA polymerase or due to deamination of cytosine. The polypeptide is Uracil-DNA glycosylase (Mycobacteroides abscessus (strain ATCC 19977 / DSM 44196 / CCUG 20993 / CIP 104536 / JCM 13569 / NCTC 13031 / TMC 1543 / L948) (Mycobacterium abscessus)).